The chain runs to 347 residues: NADH-ubiquinone oxidoreductase chain 2 (347 aa).

10 helical membrane-spanning segments follow: residues 1 to 21 (MNPI…TIVM), 25 to 45 (HWLT…PMLM), 59 to 79 (YFLT…INLM), 96 to 116 (IILT…FWVP), 148 to 168 (IINL…GGWG), 178 to 198 (IMAY…IYNP), 200 to 220 (LTML…MLLI), 237 to 257 (MPLI…LPPL), 274 to 294 (NSII…YFYM), and 326 to 346 (LSPL…MMIL).

It belongs to the complex I subunit 2 family. Core subunit of respiratory chain NADH dehydrogenase (Complex I) which is composed of 45 different subunits. Interacts with TMEM242.

The protein resides in the mitochondrion inner membrane. It carries out the reaction a ubiquinone + NADH + 5 H(+)(in) = a ubiquinol + NAD(+) + 4 H(+)(out). Functionally, core subunit of the mitochondrial membrane respiratory chain NADH dehydrogenase (Complex I) which catalyzes electron transfer from NADH through the respiratory chain, using ubiquinone as an electron acceptor. Essential for the catalytic activity and assembly of complex I. In Gardnerycteris crenulata (Striped hairy-nosed bat), this protein is NADH-ubiquinone oxidoreductase chain 2.